The sequence spans 261 residues: uncharacterized protein (261 aa).

Ile22–Phe46 contacts NADP(+). Ser153 contributes to the substrate binding site. The active-site Proton acceptor is Tyr166.

It belongs to the short-chain dehydrogenases/reductases (SDR) family.

This is an uncharacterized protein from Escherichia coli (strain K12).